The sequence spans 323 residues: Serine/threonine-protein phosphatase PP1-gamma catalytic subunit (323 aa).

Ala2 carries the post-translational modification N-acetylalanine. The Mn(2+) site is built by Asp64, His66, Asp92, and Asn124. His125 (proton donor) is an active-site residue. Residues His173 and His248 each coordinate Mn(2+). A disordered region spans residues 302 to 323 (KKPNATRPVTPPRGMITKQAKK). 2 positions are modified to phosphothreonine: Thr307 and Thr311.

This sequence belongs to the PPP phosphatase family. PP-1 subfamily. In terms of assembly, PP1 comprises a catalytic subunit, PPP1CA, PPP1CB or PPP1CC, which is folded into its native form by inhibitor 2 and glycogen synthetase kinase 3, and then complexed to one or several targeting or regulatory subunits. PPP1R12A, PPP1R12B and PPP1R12C mediate binding to myosin. PPP1R3A (in skeletal muscle), PPP1R3B (in liver), PPP1R3C, PPP1R3D and PPP1R3F (in brain) mediate binding to glycogen. Interacts with cyanobacterial toxin microcystin; disulfide-linked. Interacts with PPP1R3B and PPP1R7. Isoform 2 interacts with SPZ1. Interacts with CDCA2. PPP1R15A and PPP1R15B mediate binding to EIF2S1. Part of a complex containing PPP1R15B, PP1 and NCK1/2. Interacts with IKFZ1; the interaction targets PPP1CC to pericentromeric heterochromatin, dephosphorylates IKAROS, stabilizes it and prevents it from degradation. Interacts with PPP1R42; the interaction is direct. Interacts with NOM1 and PPP1R8. Component of the PTW/PP1 phosphatase complex, composed of PPP1R10/PNUTS, TOX4, WDR82, and PPP1CA or PPP1CB or PPP1CC. Interacts with PPP1R8. Interacts with isoform 1 and isoform 4 NEK2. Interacts with URI1; the interaction is phosphorylation-dependent and occurs in a growth factor-dependent manner. Interacts with FOXP3. Interacts with TMEM225 (via RVxF motif). Interacts with MKI67. Interacts with RRP1B; this targets PPP1CC to the nucleolus. Interacts with PPP1R2B. Found in a complex with PPP1CA, PPP1CC, SHC1 and PEAK1. Interacts with DYNLT4. Interacts (via RVxF motif) with FIRRM; regulates PLK1 kinase activity. Interacts with the KNL1 complex subunit KNL1; the interaction is direct and mutually exclusive with KNL1 binding to microtubules. Component of the SHOC2-MRAS-PP1c (SMP) complex consisting of SHOC2, GTP-bound M-Ras/MRAS and the catalytic subunit of protein phosphatase 1 (either PPP1CA, PPP1CB or PPP1CC). SHOC2 and PP1c preferably bind M-Ras/MRAS, but they also bind K-Ras/KRAS, N-Ras/NRAS and H-Ras/HRAS; these interactions are GTP-dependent and both SHOC2 and PP1c are required to form a stable complex. Interacts with SHOC2 in the absence of Ras GTPases. The cofactor is Mn(2+). Post-translationally, phosphorylated by NEK2.

It localises to the cytoplasm. Its subcellular location is the nucleus. It is found in the nucleolus. The protein resides in the nucleoplasm. The protein localises to the nucleus speckle. It localises to the chromosome. Its subcellular location is the centromere. It is found in the kinetochore. The protein resides in the cleavage furrow. The protein localises to the midbody. It localises to the mitochondrion. Its subcellular location is the cytoskeleton. It is found in the microtubule organizing center. It carries out the reaction O-phospho-L-seryl-[protein] + H2O = L-seryl-[protein] + phosphate. The catalysed reaction is O-phospho-L-threonyl-[protein] + H2O = L-threonyl-[protein] + phosphate. With respect to regulation, inactivated by binding to URI1. The phosphatase activity of the PPP1R15A-PP1 complex toward EIF2S1 is specifically inhibited by Salubrinal, a drug that protects cells from endoplasmic reticulum stress. Functionally, protein phosphatase that associates with over 200 regulatory proteins to form highly specific holoenzymes which dephosphorylate hundreds of biological targets. Protein phosphatase 1 (PP1) is essential for cell division, and participates in the regulation of glycogen metabolism, muscle contractility and protein synthesis. Dephosphorylates RPS6KB1. Involved in regulation of ionic conductances and long-term synaptic plasticity. May play an important role in dephosphorylating substrates such as the postsynaptic density-associated Ca(2+)/calmodulin dependent protein kinase II. Component of the PTW/PP1 phosphatase complex, which plays a role in the control of chromatin structure and cell cycle progression during the transition from mitosis into interphase. In balance with CSNK1D and CSNK1E, determines the circadian period length, through the regulation of the speed and rhythmicity of PER1 and PER2 phosphorylation. May dephosphorylate CSNK1D and CSNK1E. Regulates the recruitment of the SKA complex to kinetochores. Dephosphorylates the 'Ser-418' residue of FOXP3 in regulatory T-cells (Treg) from patients with rheumatoid arthritis, thereby inactivating FOXP3 and rendering Treg cells functionally defective. Together with PPP1CA (PP1-alpha subunit), dephosphorylates IFIH1/MDA5 and RIG-I leading to their activation and a functional innate immune response. Core component of the SHOC2-MRAS-PP1c (SMP) holophosphatase complex that regulates the MAPK pathway activation. The SMP complex specifically dephosphorylates the inhibitory phosphorylation at 'Ser-259' of RAF1 kinase, 'Ser-365' of BRAF kinase and 'Ser-214' of ARAF kinase, stimulating their kinase activities. Dephosphorylates MKI67 at the onset of anaphase. The SMP complex enhances the dephosphorylation activity and substrate specificity of PP1c. The protein is Serine/threonine-protein phosphatase PP1-gamma catalytic subunit (PPP1CC) of Homo sapiens (Human).